Reading from the N-terminus, the 1465-residue chain is Gag-Pol polyprotein (1465 aa).

Gly2 carries the N-myristoyl glycine; by host lipid modification. Positions 16 to 22 (FEHIRLR) match the Nuclear export signal motif. Positions 26–32 (KKKYQIK) match the Nuclear localization signal motif. The disordered stretch occupies residues 116-144 (NAERNTTETSSGQKKNDKGVTVPPGGSQN). 2 consecutive CCHC-type zinc fingers follow at residues 402 to 419 (VKCY…QCPE) and 423 to 440 (MRCL…DCRG). The Peptidase A2 domain maps to 532 to 603 (IRALLDTGAD…TPINIIGRNI (72 aa)). Asp537 functions as the For protease activity; shared with dimeric partner in the catalytic mechanism. The Reverse transcriptase domain occupies 659 to 849 (EGKISKIGGE…PPYEWMGYKL (191 aa)). Mg(2+) is bound by residues Asp725, Asp800, and Asp801. The tract at residues 842-850 (YEWMGYKLW) is RT 'primer grip'. The Tryptophan repeat motif signature appears at 1012–1028 (WEQWWADYWQVSWIPDW). Positions 1048 to 1171 (IPKEDVYYVD…IDKLVSQGMR (124 aa)) constitute an RNase H type-1 domain. Mg(2+) is bound by residues Asp1057, Glu1092, Asp1112, and Asp1163. The Integrase-type zinc finger occupies 1177–1218 (EKIEEAQEEHERYHNNWRNLADTYGLPQIVAKEIVAMCPKCQ). Positions 1186, 1190, 1214, and 1217 each coordinate Zn(2+). Residues 1228 to 1378 (VDASPGVWQM…TPAERLINMI (151 aa)) form the Integrase catalytic domain. Mg(2+) contacts are provided by Asp1238 and Asp1290. The integrase-type DNA-binding region spans 1397–1444 (FRVYYREGRDPVWKGPGQLIWKGEGAVVIKGGVELKEYPRRKAKIIKD).

Homotrimer. Interacts with gp41 (via C-terminus). In terms of assembly, homodimer. The active site consists of two apposed aspartic acid residues. As to quaternary structure, heterodimer of p66 RT and p51 RT (RT p66/p51). Heterodimerization of RT is essential for DNA polymerase activity. Despite the sequence identities, p66 RT and p51 RT have distinct folding. Homotetramer; may further associate as a homohexadecamer. Mg(2+) serves as cofactor. In terms of processing, specific enzymatic cleavages by the viral protease yield mature proteins. The protease is released by autocatalytic cleavage. The polyprotein is cleaved during and after budding, this process is termed maturation. Proteolytic cleavage of p66 RT removes the RNase H domain to yield the p51 RT subunit. Post-translationally, capsid protein p24 is phosphorylated.

It is found in the virion. The protein resides in the host nucleus. The protein localises to the host cytoplasm. Its subcellular location is the host cell membrane. The enzyme catalyses Specific for a P1 residue that is hydrophobic, and P1' variable, but often Pro.. The catalysed reaction is Endohydrolysis of RNA in RNA/DNA hybrids. Three different cleavage modes: 1. sequence-specific internal cleavage of RNA. Human immunodeficiency virus type 1 and Moloney murine leukemia virus enzymes prefer to cleave the RNA strand one nucleotide away from the RNA-DNA junction. 2. RNA 5'-end directed cleavage 13-19 nucleotides from the RNA end. 3. DNA 3'-end directed cleavage 15-20 nucleotides away from the primer terminus.. It catalyses the reaction 3'-end directed exonucleolytic cleavage of viral RNA-DNA hybrid.. It carries out the reaction DNA(n) + a 2'-deoxyribonucleoside 5'-triphosphate = DNA(n+1) + diphosphate. With respect to regulation, the viral protease is inhibited by many synthetic protease inhibitors (PIs), such as amprenavir, atazanavir, indinavir, loprinavir, nelfinavir, ritonavir and saquinavir. RT can be inhibited either by nucleoside RT inhibitors (NRTIs) or by non nucleoside RT inhibitors (NNRTIs). NRTIs act as chain terminators, whereas NNRTIs inhibit DNA polymerization by binding a small hydrophobic pocket near the RT active site and inducing an allosteric change in this region. Classical NRTIs are abacavir, adefovir (PMEA), didanosine (ddI), lamivudine (3TC), stavudine (d4T), tenofovir (PMPA), zalcitabine (ddC), and zidovudine (AZT). Classical NNRTIs are atevirdine (BHAP U-87201E), delavirdine, efavirenz (DMP-266), emivirine (I-EBU), and nevirapine (BI-RG-587). The tritherapies used as a basic effective treatment of AIDS associate two NRTIs and one NNRTI. Use of protease inhibitors in tritherapy regimens permit more ambitious therapeutic strategies. Functionally, gag-Pol polyprotein and Gag polyprotein may regulate their own translation, by the binding genomic RNA in the 5'-UTR. At low concentration, Gag-Pol and Gag would promote translation, whereas at high concentration, the polyproteins encapsidate genomic RNA and then shut off translation. In terms of biological role, matrix protein p17 has two main functions: in infected cell, it targets Gag and Gag-pol polyproteins to the plasma membrane via a multipartite membrane-binding signal, that includes its myristointegration complex. The myristoylation signal and the NLS exert conflicting influences its subcellular localization. The key regulation of these motifs might be phosphorylation of a portion of MA molecules on the C-terminal tyrosine at the time of virus maturation, by virion-associated cellular tyrosine kinase. Implicated in the release from host cell mediated by Vpu. Capsid protein p24 forms the conical core that encapsulates the genomic RNA-nucleocapsid complex in the virion. The core is constituted by capsid protein hexamer subunits. The core is disassembled soon after virion entry. Interaction with host PPIA/CYPA protects the virus from restriction by host TRIM5-alpha and from an unknown antiviral activity in host cells. This capsid restriction by TRIM5 is one of the factors which restricts SIV to the simian species. Its function is as follows. Nucleocapsid protein p7 encapsulates and protects viral dimeric unspliced (genomic) RNA. Binds these RNAs through its zinc fingers. Facilitates rearangement of nucleic acid secondary structure during retrotranscription of genomic RNA. This capability is referred to as nucleic acid chaperone activity. Functionally, the aspartyl protease mediates proteolytic cleavages of Gag and Gag-Pol polyproteins during or shortly after the release of the virion from the plasma membrane. Cleavages take place as an ordered, step-wise cascade to yield mature proteins. This process is called maturation. Displays maximal activity during the budding process just prior to particle release from the cell. Also cleaves Nef and Vif, probably concomitantly with viral structural proteins on maturation of virus particles. Hydrolyzes host EIF4GI and PABP1 in order to shut off the capped cellular mRNA translation. The resulting inhibition of cellular protein synthesis serves to ensure maximal viral gene expression and to evade host immune response. In terms of biological role, reverse transcriptase/ribonuclease H (RT) is a multifunctional enzyme that converts the viral dimeric RNA genome into dsDNA in the cytoplasm, shortly after virus entry into the cell. This enzyme displays a DNA polymerase activity that can copy either DNA or RNA templates, and a ribonuclease H (RNase H) activity that cleaves the RNA strand of RNA-DNA heteroduplexes in a partially processive 3' to 5' endonucleasic mode. Conversion of viral genomic RNA into dsDNA requires many steps. A tRNA binds to the primer-binding site (PBS) situated at the 5'-end of the viral RNA. RT uses the 3' end of the tRNA primer to perform a short round of RNA-dependent minus-strand DNA synthesis. The reading proceeds through the U5 region and ends after the repeated (R) region which is present at both ends of viral RNA. The portion of the RNA-DNA heteroduplex is digested by the RNase H, resulting in a ssDNA product attached to the tRNA primer. This ssDNA/tRNA hybridizes with the identical R region situated at the 3' end of viral RNA. This template exchange, known as minus-strand DNA strong stop transfer, can be either intra- or intermolecular. RT uses the 3' end of this newly synthesized short ssDNA to perform the RNA-dependent minus-strand DNA synthesis of the whole template. RNase H digests the RNA template except for two polypurine tracts (PPTs) situated at the 5'-end and near the center of the genome. It is not clear if both polymerase and RNase H activities are simultaneous. RNase H can probably proceed both in a polymerase-dependent (RNA cut into small fragments by the same RT performing DNA synthesis) and a polymerase-independent mode (cleavage of remaining RNA fragments by free RTs). Secondly, RT performs DNA-directed plus-strand DNA synthesis using the PPTs that have not been removed by RNase H as primers. PPTs and tRNA primers are then removed by RNase H. The 3' and 5' ssDNA PBS regions hybridize to form a circular dsDNA intermediate. Strand displacement synthesis by RT to the PBS and PPT ends produces a blunt ended, linear dsDNA copy of the viral genome that includes long terminal repeats (LTRs) at both ends. Integrase catalyzes viral DNA integration into the host chromosome, by performing a series of DNA cutting and joining reactions. This enzyme activity takes place after virion entry into a cell and reverse transcription of the RNA genome in dsDNA. The first step in the integration process is 3' processing. This step requires a complex comprising the viral genome, matrix protein, Vpr and integrase. This complex is called the pre-integration complex (PIC). The integrase protein removes 2 nucleotides from each 3' end of the viral DNA, leaving recessed CA OH's at the 3' ends. In the second step, the PIC enters cell nucleus. This process is mediated through integrase and Vpr proteins, and allows the virus to infect a non dividing cell. This ability to enter the nucleus is specific of lentiviruses, other retroviruses cannot and rely on cell division to access cell chromosomes. In the third step, termed strand transfer, the integrase protein joins the previously processed 3' ends to the 5' ends of strands of target cellular DNA at the site of integration. The 5'-ends are produced by integrase-catalyzed staggered cuts, 5 bp apart. A Y-shaped, gapped, recombination intermediate results, with the 5'-ends of the viral DNA strands and the 3' ends of target DNA strands remaining unjoined, flanking a gap of 5 bp. The last step is viral DNA integration into host chromosome. This involves host DNA repair synthesis in which the 5 bp gaps between the unjoined strands are filled in and then ligated. Since this process occurs at both cuts flanking the SIV genome, a 5 bp duplication of host DNA is produced at the ends of SIV integration. Alternatively, Integrase may catalyze the excision of viral DNA just after strand transfer, this is termed disintegration. This Cercopithecidae (Old World monkeys) protein is Gag-Pol polyprotein (gag-pol).